The chain runs to 993 residues: ATP-dependent DNA helicase MPH1 (993 aa).

In terms of domain architecture, Helicase ATP-binding spans 94-261; sequence IVHKSLFQNT…EVVNNLDISK (168 aa). 107 to 114 contacts ATP; the sequence is IPTGMGKT. A DEAH box motif is present at residues 209 to 212; sequence DEAH. The Helicase C-terminal domain occupies 507-655; the sequence is KVERLHRQEQ…CIDYKKSDRI (149 aa). The disordered stretch occupies residues 530–551; sequence NDKLERSARRTGSSEEAQISGM. Residues 539 to 551 are compositionally biased toward polar residues; sequence RTGSSEEAQISGM.

Belongs to the DEAD box helicase family. DEAH subfamily. FANCM sub-subfamily. As to quaternary structure, interacts with the MHF histone-fold complex to form the FANCM-MHF complex.

Its subcellular location is the nucleus. It catalyses the reaction ATP + H2O = ADP + phosphate + H(+). In terms of biological role, ATP-dependent DNA helicase involved in DNA damage repair by homologous recombination and in genome maintenance. Capable of unwinding D-loops. Plays a role in limiting crossover recombinants during mitotic DNA double-strand break (DSB) repair. Component of a FANCM-MHF complex which promotes gene conversion at blocked replication forks, probably by reversal of the stalled fork. This chain is ATP-dependent DNA helicase MPH1, found in Saccharomyces cerevisiae (strain YJM789) (Baker's yeast).